The following is a 77-amino-acid chain: Liver-expressed antimicrobial peptide 2 (77 aa).

The N-terminal stretch at 1–22 (MWHLKLCAVLMIFLLLLGQTDG) is a signal peptide. The propeptide occupies 23 to 37 (SPIPEVSSAKRRPRR). 2 disulfide bridges follow: Cys-54-Cys-65 and Cys-60-Cys-70.

This sequence belongs to the LEAP2 family.

The protein resides in the secreted. Functionally, has an antimicrobial activity. The polypeptide is Liver-expressed antimicrobial peptide 2 (LEAP2) (Macaca mulatta (Rhesus macaque)).